Consider the following 603-residue polypeptide: Dual specificity protein phosphatase CDC14A (603 aa).

Positions 7 to 162 are a; that stretch reads ELIGACEFMK…GLQHGFFDFE (156 aa). The segment at 163-176 is linker; the sequence is TFDAEEYEHYERVE. Residues 177-343 form a b region; sequence NGDFNWIVPG…QGDIFRSKLK (167 aa). One can recognise a Tyrosine-protein phosphatase domain in the interval 179–336; it reads DFNWIVPGKF…KQASLWVQGD (158 aa). Cys278 serves as the catalytic Phosphocysteine intermediate. Residue Ser484 is modified to Phosphoserine. The segment covering 518–538 has biased composition (polar residues); the sequence is NGSTQTPGRNYPELNNNQYTR. Positions 518–583 are disordered; that stretch reads NGSTQTPGRN…RPSFPGSLSS (66 aa). Low complexity-rich tracts occupy residues 539–558 and 573–583; these read SSNSNSSSSSSGLGGNLNSS and LRPSFPGSLSS. Residue Ser592 is modified to Phosphoserine.

It belongs to the protein-tyrosine phosphatase family. Non-receptor class CDC14 subfamily. As to quaternary structure, interacts with KIF20A. Interaction is required to localize CDC14 to the midzone of the mitotic spindle. As to expression, expressed in the inner ear.

The protein resides in the nucleus. Its subcellular location is the cytoplasm. The protein localises to the cytoskeleton. It is found in the microtubule organizing center. It localises to the centrosome. The protein resides in the spindle. Its subcellular location is the cell projection. The protein localises to the kinocilium. It is found in the spindle pole. It localises to the stereocilium. It catalyses the reaction O-phospho-L-tyrosyl-[protein] + H2O = L-tyrosyl-[protein] + phosphate. The catalysed reaction is O-phospho-L-seryl-[protein] + H2O = L-seryl-[protein] + phosphate. It carries out the reaction O-phospho-L-threonyl-[protein] + H2O = L-threonyl-[protein] + phosphate. Functionally, dual-specificity phosphatase. Required for centrosome separation and productive cytokinesis during cell division. Dephosphorylates SIRT2 around early anaphase. May dephosphorylate the APC subunit FZR1/CDH1, thereby promoting APC-FZR1 dependent degradation of mitotic cyclins and subsequent exit from mitosis. Required for normal hearing. The sequence is that of Dual specificity protein phosphatase CDC14A (Cdc14a) from Mus musculus (Mouse).